Consider the following 131-residue polypeptide: (R)-mandelonitrile lyase (131 aa).

One can recognise a Cupin type-2 domain in the interval 42–104 (VTFEPGARTA…WHGAAPTTAM (63 aa)). His53, His55, Gln59, His94, and His96 together coordinate Mn(2+).

It belongs to the cupin domain-containing hydroxynitrile lyase family. Mn(2+) serves as cofactor.

The enzyme catalyses (R)-mandelonitrile = benzaldehyde + hydrogen cyanide. Its function is as follows. Hydroxynitrile lyase which catalyzes mandelonitrile formation from benzaldehyde and hydrogen cyanide with high stereoselectivity in presence of manganese. The polypeptide is (R)-mandelonitrile lyase (Granulicella tundricola (strain ATCC BAA-1859 / DSM 23138 / MP5ACTX9)).